An 82-amino-acid chain; its full sequence is RNA-binding protein GK0100 (82 aa).

Belongs to the eukaryotic ribosomal protein eL8 family.

The sequence is that of RNA-binding protein GK0100 from Geobacillus kaustophilus (strain HTA426).